The chain runs to 278 residues: MANYTAADIKALRERTGAGMMDVKKALDEADGDAEKAIEIIRVKGLKGATKREGRSAAEGLVAATVENGVGVMIELNCETDFVAKADKFIALGDVVLRAAVASGATDVDGLLASDYEGRTLGDYVTEEGALLGEKVAVRRLARVEGAFVDAYLHKTSKDLPAQVGVLLAVDADSADAKTAAHDIAVHTAAYSPTYLTREDVPAETVENERRIADETARAEGKPEQALPKIVEGRLTGFFKEIVLVDQPFAKDPKQTVGKVASDAGTNVTGFARFRVGN.

Residues 80–83 (TDFV) form an involved in Mg(2+) ion dislocation from EF-Tu region.

The protein belongs to the EF-Ts family.

The protein resides in the cytoplasm. Its function is as follows. Associates with the EF-Tu.GDP complex and induces the exchange of GDP to GTP. It remains bound to the aminoacyl-tRNA.EF-Tu.GTP complex up to the GTP hydrolysis stage on the ribosome. The sequence is that of Elongation factor Ts from Micrococcus luteus (strain ATCC 4698 / DSM 20030 / JCM 1464 / CCM 169 / CCUG 5858 / IAM 1056 / NBRC 3333 / NCIMB 9278 / NCTC 2665 / VKM Ac-2230) (Micrococcus lysodeikticus).